Consider the following 473-residue polypeptide: Phosphatidylserine synthase 1 (473 aa).

Alanine 2 is subject to N-acetylalanine. Over 2–35 (ASCVGSRTLSKDDVNYRMHFRMINEQQVEDITID) the chain is Cytoplasmic. The chain crosses the membrane as a helical span at residues 36-56 (FFYRPHTITLLSFTIISLMYF). The Lumenal portion of the chain corresponds to 57–72 (AFTRDDSVPEDNIWRG). A helical transmembrane segment spans residues 73–93 (ILSVIFFFLIISVLAFPNGPF). At 94-102 (TRPHPALWR) the chain is on the cytoplasmic side. Residues 103–123 (MVFGLSVLYFLFLVFLLFLNF) form a helical membrane-spanning segment. The Lumenal segment spans residues 124-186 (EQVKSLMYWL…AMKALLIRSY (63 aa)). A helical membrane pass occupies residues 187-207 (GLCWTISITWELTELFFMHLL). Residues 208–216 (PNFAECWWD) are Cytoplasmic-facing. A helical membrane pass occupies residues 217–237 (QVILDILLCNGGGIWLGMVVC). The Lumenal portion of the chain corresponds to 238-286 (RFLEMRTYHWASFKDIHTTTGKIKRAVLQFTPASWTYVRWFDPKSSFQR). A helical membrane pass occupies residues 287-307 (VAGIYLFMIIWQLTELNTFFL). Residues 308–319 (KHIFVFQASHPL) lie on the Cytoplasmic side of the membrane. A helical transmembrane segment spans residues 320–342 (SWGRILFIGCITAPTVRQYYAYL). At 343–355 (TDTQCKRVGTQCW) the chain is on the lumenal side. A helical transmembrane segment spans residues 356 to 376 (VFGVIGFLEAIVCIKFGQDLF). The Cytoplasmic portion of the chain corresponds to 377 to 383 (SKTQILY). Residues 384-404 (VMLWLLCVAFTTFLCLYGMVW) traverse the membrane as a helical segment. The Lumenal segment spans residues 405–473 (YAEHYGHREK…SKVTNGVGKK (69 aa)). Phosphoserine occurs at positions 417, 425, 442, and 454. Positions 428–473 (ISWHHGKGSKGSEDSPPKHSSNHESHSSRRRNRHSKSKVTNGVGKK) are disordered. Over residues 437-454 (KGSEDSPPKHSSNHESHS) the composition is skewed to basic and acidic residues. Positions 455–464 (SRRRNRHSKS) are enriched in basic residues.

It belongs to the phosphatidyl serine synthase family. As to expression, expressed in kidney, testis, lung, skeletal muscle, liver brain, heart and spleen with highest expression in testis, liver, heart and brain.

It is found in the endoplasmic reticulum membrane. It catalyses the reaction a 1,2-diacyl-sn-glycero-3-phosphoethanolamine + L-serine = a 1,2-diacyl-sn-glycero-3-phospho-L-serine + ethanolamine. The enzyme catalyses a 1,2-diacyl-sn-glycero-3-phosphocholine + L-serine = a 1,2-diacyl-sn-glycero-3-phospho-L-serine + choline. The protein operates within phospholipid metabolism; phosphatidylserine biosynthesis. Potently inhibited by choline in the mitochondria-associated membrane (MAM). Very little inhibition by choline in the endoplasmic reticulum (ER) per se. In terms of biological role, catalyzes a base-exchange reaction in which the polar head group of phosphatidylethanolamine (PE) or phosphatidylcholine (PC) is replaced by L-serine. Catalyzes mainly the conversion of phosphatidylcholine. Also converts, in vitro and to a lesser extent, phosphatidylethanolamine. The polypeptide is Phosphatidylserine synthase 1 (Ptdss1) (Mus musculus (Mouse)).